The chain runs to 623 residues: Sodium-coupled monocarboxylate transporter 2 (623 aa).

The Extracellular portion of the chain corresponds to 1–10 (METVGRFQAG). The chain crosses the membrane as a helical span at residues 11–31 (DYVVFACLFVVSSGIGVFFAI). Residues 32–50 (KERNKAPSKEFLVGGRQMS) lie on the Cytoplasmic side of the membrane. The helical transmembrane segment at 51–71 (CGPVALSLTASFMSAVTVIGA) threads the bilayer. Residues 72–83 (PADVYRFGASYV) are Extracellular-facing. The helical transmembrane segment at 84–104 (IFGVAYTFVVFFTAELFLPVF) threads the bilayer. Residues 105–129 (YRSGITSTYEYLELRFCKLVRVAAT) are Cytoplasmic-facing. Residues 130–150 (LIYIIQTILYTGVVVYAPALA) form a helical membrane-spanning segment. The Extracellular portion of the chain corresponds to 151–158 (LNQVTGFD). A helical transmembrane segment spans residues 159 to 179 (LWGSIFATGIVCTFYCTLGGL). Over 180 to 181 (KA) the chain is Cytoplasmic. The chain crosses the membrane as a helical span at residues 182-202 (VVWTDAFQMVVMVVGFLTVLI). The Extracellular portion of the chain corresponds to 203–236 (QGSSRAGGIENVWSTSRTGGRLQVFDFDVSPLRR). A helical transmembrane segment spans residues 237-257 (HTFWTLSVGGTFTWLGIYGVN). Residues 258–276 (QSTIQRCISCKTEGHARWA) lie on the Cytoplasmic side of the membrane. A helical membrane pass occupies residues 277-297 (LYLNLLGLWIILFCAVVSGLI). The Extracellular portion of the chain corresponds to 298-322 (MYSYYSHCDPWSSGLISAPDQLMPY). A helical membrane pass occupies residues 323 to 343 (FVMEILGAFPGLPGLFVACAF). Over 344 to 386 (SGTLSTVAASINALATVMYEDFVSQCFPDLSNRAASWISKALC) the chain is Cytoplasmic. Residues 387–407 (VAFGVACTTMAVAASYMGGIV) traverse the membrane as a helical segment. The Extracellular portion of the chain corresponds to 408–412 (QAALS). Residues 413–433 (IHGMCGGPVLGLFSLGILFPF) traverse the membrane as a helical segment. The Cytoplasmic portion of the chain corresponds to 434–438 (TNLKG). Residues 439–459 (AVGGLIVGISLSFWVGVGAFI) traverse the membrane as a helical segment. Topologically, residues 460–510 (YPAPSNNTHALELNTAGCNITAAAFEPTSATVTQLTSDRNWLADSWYSMSY) are extracellular. 2 N-linked (GlcNAc...) asparagine glycosylation sites follow: asparagine 465 and asparagine 478. A helical membrane pass occupies residues 511-531 (LYYSAVGFIGTVAAGLLITLL). Residues 532–623 (TGPMDPKLLK…NETSIVQKKL (92 aa)) lie on the Cytoplasmic side of the membrane.

Belongs to the sodium:solute symporter (SSF) (TC 2.A.21) family.

The protein localises to the apical cell membrane. The catalysed reaction is (S)-lactate(out) + Na(+)(out) = (S)-lactate(in) + Na(+)(in). It catalyses the reaction nicotinate(out) + Na(+)(out) = nicotinate(in) + Na(+)(in). It carries out the reaction pyruvate(out) + Na(+)(out) = pyruvate(in) + Na(+)(in). The enzyme catalyses propanoate(out) + Na(+)(out) = propanoate(in) + Na(+)(in). The catalysed reaction is butanoate(out) + Na(+)(out) = butanoate(in) + Na(+)(in). It catalyses the reaction acetoacetate(out) + Na(+)(out) = acetoacetate(in) + Na(+)(in). Functionally, acts as an electroneutral and low-affinity sodium (Na(+))-dependent sodium-coupled solute transporter. Catalyzes the transport across the plasma membrane of many monocarboxylates such as lactate, pyruvate, nicotinate, propionate, butyrate and beta-D-hydroxybutyrate. This is Sodium-coupled monocarboxylate transporter 2 (slc5a12) from Danio rerio (Zebrafish).